The following is a 118-amino-acid chain: Non-specific lipid-transfer protein 2A (118 aa).

An N-terminal signal peptide occupies residues 1–26; it reads MARAQLVLVALVAAALLLAGPHTTMA. Cystine bridges form between C30-C77, C40-C54, C55-C100, and C75-C114.

Belongs to the plant LTP family.

Plant non-specific lipid-transfer proteins transfer phospholipids as well as galactolipids across membranes. May play a role in wax or cutin deposition in the cell walls of expanding epidermal cells and certain secretory tissues. The polypeptide is Non-specific lipid-transfer protein 2A (LTP2-A) (Oryza sativa subsp. japonica (Rice)).